The sequence spans 455 residues: Bifunctional protein GlmU (455 aa).

The pyrophosphorylase stretch occupies residues Met1–Lys227. UDP-N-acetyl-alpha-D-glucosamine-binding positions include Leu9–Gly12, Lys23, Gln74, Gly79–Thr80, Tyr101–Asp103, Gly137, Glu152, Asn167, and Asn225. A Mg(2+)-binding site is contributed by Asp103. Residue Asn225 participates in Mg(2+) binding. Residues Val228–Ala248 are linker. The N-acetyltransferase stretch occupies residues Gly249–Gly455. UDP-N-acetyl-alpha-D-glucosamine is bound by residues Arg331 and Lys349. The active-site Proton acceptor is His361. Residues Tyr364 and Asn375 each coordinate UDP-N-acetyl-alpha-D-glucosamine. Residues Ala378, Asn384 to Tyr385, Ser403, Ala421, and Arg438 contribute to the acetyl-CoA site.

In the N-terminal section; belongs to the N-acetylglucosamine-1-phosphate uridyltransferase family. The protein in the C-terminal section; belongs to the transferase hexapeptide repeat family. Homotrimer. It depends on Mg(2+) as a cofactor.

The protein localises to the cytoplasm. It catalyses the reaction alpha-D-glucosamine 1-phosphate + acetyl-CoA = N-acetyl-alpha-D-glucosamine 1-phosphate + CoA + H(+). The enzyme catalyses N-acetyl-alpha-D-glucosamine 1-phosphate + UTP + H(+) = UDP-N-acetyl-alpha-D-glucosamine + diphosphate. Its pathway is nucleotide-sugar biosynthesis; UDP-N-acetyl-alpha-D-glucosamine biosynthesis; N-acetyl-alpha-D-glucosamine 1-phosphate from alpha-D-glucosamine 6-phosphate (route II): step 2/2. It participates in nucleotide-sugar biosynthesis; UDP-N-acetyl-alpha-D-glucosamine biosynthesis; UDP-N-acetyl-alpha-D-glucosamine from N-acetyl-alpha-D-glucosamine 1-phosphate: step 1/1. The protein operates within bacterial outer membrane biogenesis; LPS lipid A biosynthesis. In terms of biological role, catalyzes the last two sequential reactions in the de novo biosynthetic pathway for UDP-N-acetylglucosamine (UDP-GlcNAc). The C-terminal domain catalyzes the transfer of acetyl group from acetyl coenzyme A to glucosamine-1-phosphate (GlcN-1-P) to produce N-acetylglucosamine-1-phosphate (GlcNAc-1-P), which is converted into UDP-GlcNAc by the transfer of uridine 5-monophosphate (from uridine 5-triphosphate), a reaction catalyzed by the N-terminal domain. This Chromobacterium violaceum (strain ATCC 12472 / DSM 30191 / JCM 1249 / CCUG 213 / NBRC 12614 / NCIMB 9131 / NCTC 9757 / MK) protein is Bifunctional protein GlmU.